A 215-amino-acid polypeptide reads, in one-letter code: Ribonuclease T (215 aa).

Residues 20 to 194 (VVIDVETAGF…YDTLQTAKLF (175 aa)) enclose the Exonuclease domain. Mg(2+) is bound by residues Asp-23, Glu-25, His-181, and Asp-186. Catalysis depends on His-181, which acts as the Proton donor/acceptor.

This sequence belongs to the RNase T family. Homodimer. It depends on Mg(2+) as a cofactor.

Trims short 3' overhangs of a variety of RNA species, leaving a one or two nucleotide 3' overhang. Responsible for the end-turnover of tRNA: specifically removes the terminal AMP residue from uncharged tRNA (tRNA-C-C-A). Also appears to be involved in tRNA biosynthesis. The chain is Ribonuclease T from Yersinia pseudotuberculosis serotype O:1b (strain IP 31758).